We begin with the raw amino-acid sequence, 791 residues long: Solute carrier family 26 member 9 (791 aa).

Over 1 to 70 (MSQPRPRYVV…WLPKYKIKDY (70 aa)) the chain is Cytoplasmic. A helical transmembrane segment spans residues 71–96 (IIPDLLGGLSGGSIQVPQGMAFALLA). The Extracellular portion of the chain corresponds to 97-99 (NLP). The chain crosses the membrane as a helical span at residues 100 to 117 (AVNGLYSSFFPLLTYFFL). Residues 118–128 (GGVHQMVPGTF) are Cytoplasmic-facing. The helical transmembrane segment at 129-142 (AVISILVGNICLQL) threads the bilayer. The Extracellular portion of the chain corresponds to 143 to 171 (APESKFQVFNNATNESYVDTAAMEAERLH). Residues 172-190 (VSATLACLTAIIQMGLGFM) form a helical membrane-spanning segment. Residues 191-202 (QFGFVAIYLSES) are Cytoplasmic-facing. The helical transmembrane segment at 203–224 (FIRGFMTAAGLQILISVLKYIF) threads the bilayer. Topologically, residues 225–235 (GLTIPSYTGPG) are extracellular. Residues 236 to 244 (SIVFTFIDI) constitute an intramembrane region (helical). Residues 245–254 (CKNLPHTNIA) lie on the Extracellular side of the membrane. Residues 255 to 273 (SLIFALISGAFLVLVKELN) traverse the membrane as a helical segment. Residues 274-281 (ARYMHKIR) are Cytoplasmic-facing. A helical membrane pass occupies residues 282-297 (FPIPTEMIVVVVATAI). Over 298 to 327 (SGGCKMPKKYHMQIVGEIQRGFPTPVSPVV) the chain is Extracellular. Residues 328–348 (SQWKDMIGTAFSLAIVSYVIN) form a helical membrane-spanning segment. Residues 349-366 (LAMGRTLANKHGYDVDSN) are Cytoplasmic-facing. Residues 367 to 382 (QEMIALGCSNFFGSFF) form a helical membrane-spanning segment. The Extracellular portion of the chain corresponds to 383–390 (KIHVICCA). The helical transmembrane segment at 391–400 (LSVTLAVDGA) threads the bilayer. Topologically, residues 401–404 (GGKS) are cytoplasmic. The chain crosses the membrane as a helical span at residues 405–423 (QVASLCVSLVVMITMLVLG). Topologically, residues 424–428 (IYLYP) are extracellular. The helical transmembrane segment at 429–450 (LPKSVLGALIAVNLKNSLKQLT) threads the bilayer. Over 451–464 (DPYYLWRKSKLDCC) the chain is Cytoplasmic. A helical transmembrane segment spans residues 465–476 (IWVVSFLSSFFL). A topological domain (extracellular) is located at residue Ser-477. The chain crosses the membrane as a helical span at residues 478-489 (LPYGVAVGVAFS). Residues 490–791 (VLVVVFQTQF…MFHAETLTAL (302 aa)) lie on the Cytoplasmic side of the membrane. Residues 519–737 (TYNRAQDIQG…PSIHDAVLFA (219 aa)) enclose the STAS domain. Positions 602–650 (FENAPPTDPNNNQTPANGTSVSYITFSPDSSSPAQSEPPASAEAPGEPS) are disordered. Polar residues predominate over residues 610–626 (PNNNQTPANGTSVSYIT). Residues 628–650 (SPDSSSPAQSEPPASAEAPGEPS) are compositionally biased toward low complexity.

This sequence belongs to the SLC26A/SulP transporter (TC 2.A.53) family. Homodimer. Predominantly expressed in lung at the luminal side of the bronchiolar and alveolar epithelium of lung. To a lower extent, also expressed in pancreas and prostate.

The protein localises to the cell membrane. Its subcellular location is the endomembrane system. The catalysed reaction is chloride(in) = chloride(out). The enzyme catalyses hydrogencarbonate(in) + chloride(out) = hydrogencarbonate(out) + chloride(in). Inhibited by ammonium and thiosulfate. Its function is as follows. Ion transporter that can act both as an ion channel and anion exchanger. Mainly acts as a chloride channel, which mediate uncoupled chloride anion transport in an alternate-access mechanism where a saturable binding site is alternately exposed to either one or the other side of the membrane. Also acts as a DIDS- and thiosulfate- sensitive anion exchanger the exchange of chloride for bicarbonate ions across the cell membrane. This chain is Solute carrier family 26 member 9, found in Homo sapiens (Human).